We begin with the raw amino-acid sequence, 105 residues long: uncharacterized protein (105 aa).

The protein belongs to the asfivirus C122R family.

It is found in the virion. This is an uncharacterized protein from African swine fever virus (strain Badajoz 1971 Vero-adapted) (Ba71V).